Consider the following 312-residue polypeptide: Elongation factor Ts (312 aa).

Residues 84–87 (TDFV) are involved in Mg(2+) ion dislocation from EF-Tu.

Belongs to the EF-Ts family.

It localises to the cytoplasm. Functionally, associates with the EF-Tu.GDP complex and induces the exchange of GDP to GTP. It remains bound to the aminoacyl-tRNA.EF-Tu.GTP complex up to the GTP hydrolysis stage on the ribosome. This Caulobacter vibrioides (strain ATCC 19089 / CIP 103742 / CB 15) (Caulobacter crescentus) protein is Elongation factor Ts.